We begin with the raw amino-acid sequence, 225 residues long: Ribulose-phosphate 3-epimerase (225 aa).

Ser10 is a substrate binding site. His35, Asp37, and His68 together coordinate a divalent metal cation. Catalysis depends on Asp37, which acts as the Proton acceptor. Residues His68, Gly144 to Gly147, and Asp175 to Gly177 each bind substrate. Residue Asp175 coordinates a divalent metal cation. Catalysis depends on Asp175, which acts as the Proton donor.

The protein belongs to the ribulose-phosphate 3-epimerase family. It depends on a divalent metal cation as a cofactor.

It carries out the reaction D-ribulose 5-phosphate = D-xylulose 5-phosphate. It participates in carbohydrate degradation. Catalyzes the reversible epimerization of D-ribulose 5-phosphate to D-xylulose 5-phosphate. The protein is Ribulose-phosphate 3-epimerase of Rhodospirillum rubrum.